The sequence spans 455 residues: Ribulose bisphosphate carboxylase large chain (455 aa).

K5 bears the N6,N6,N6-trimethyllysine mark. Substrate is bound by residues N114 and T164. The Proton acceptor role is filled by K166. K168 serves as a coordination point for substrate. Mg(2+) is bound by residues K192, D194, and E195. The residue at position 192 (K192) is an N6-carboxylysine. The active-site Proton acceptor is H285. Positions 286, 318, and 370 each coordinate substrate.

This sequence belongs to the RuBisCO large chain family. Type I subfamily. Heterohexadecamer of 8 large chains and 8 small chains; disulfide-linked. The disulfide link is formed within the large subunit homodimers. The cofactor is Mg(2+). Post-translationally, the disulfide bond which can form in the large chain dimeric partners within the hexadecamer appears to be associated with oxidative stress and protein turnover.

The protein localises to the plastid. It is found in the chloroplast. It carries out the reaction 2 (2R)-3-phosphoglycerate + 2 H(+) = D-ribulose 1,5-bisphosphate + CO2 + H2O. The catalysed reaction is D-ribulose 1,5-bisphosphate + O2 = 2-phosphoglycolate + (2R)-3-phosphoglycerate + 2 H(+). Functionally, ruBisCO catalyzes two reactions: the carboxylation of D-ribulose 1,5-bisphosphate, the primary event in carbon dioxide fixation, as well as the oxidative fragmentation of the pentose substrate in the photorespiration process. Both reactions occur simultaneously and in competition at the same active site. This chain is Ribulose bisphosphate carboxylase large chain, found in Vachellia farnesiana (Sweet acacia).